The following is a 748-amino-acid chain: Photosystem I P700 chlorophyll a apoprotein A1 (748 aa).

Helical transmembrane passes span 70-93 (VFSAHFGQIAVILIWLSGMYFHGA), 156-179 (LYSTAIGGLVLATLTLIGGWYHYH), 195-219 (LNHHLAGLIGLGSLSWAGHQIHVSL), 291-309 (TAHHHLAIAVLFIIAGHQY), 346-369 (WHAQLALNLALFGSLTIIVAHHMY), 385-411 (LSLFTHHMWIGGFLVTGAAAHAAIFLV), 433-455 (AIISHLNWVCIFLGFHSFGLYIH), and 530-548 (FLVHHIHAFTIHVTVLILL). [4Fe-4S] cluster-binding residues include Cys-572 and Cys-581. 2 helical membrane-spanning segments follow: residues 588-609 (HVFLGLFWMYNSISVVIFHFSW) and 662-684 (LSAYGLIFLGAHFVWAFSLMFLF). Chlorophyll a' is bound at residue His-673. 2 residues coordinate chlorophyll a: Met-681 and Tyr-689. Trp-690 is a binding site for phylloquinone. The helical transmembrane segment at 722 to 742 (AVGVAHYLLGGIATTWAFFLA) threads the bilayer.

The protein belongs to the PsaA/PsaB family. The PsaA/B heterodimer binds the P700 chlorophyll special pair and subsequent electron acceptors. PSI consists of a core antenna complex that captures photons, and an electron transfer chain that converts photonic excitation into a charge separation. The eukaryotic PSI reaction center is composed of at least 11 subunits. P700 is a chlorophyll a/chlorophyll a' dimer, A0 is one or more chlorophyll a, A1 is one or both phylloquinones and FX is a shared 4Fe-4S iron-sulfur center. serves as cofactor.

The protein localises to the plastid. It is found in the chloroplast thylakoid membrane. It catalyses the reaction reduced [plastocyanin] + hnu + oxidized [2Fe-2S]-[ferredoxin] = oxidized [plastocyanin] + reduced [2Fe-2S]-[ferredoxin]. Functionally, psaA and PsaB bind P700, the primary electron donor of photosystem I (PSI), as well as the electron acceptors A0, A1 and FX. PSI is a plastocyanin-ferredoxin oxidoreductase, converting photonic excitation into a charge separation, which transfers an electron from the donor P700 chlorophyll pair to the spectroscopically characterized acceptors A0, A1, FX, FA and FB in turn. Oxidized P700 is reduced on the lumenal side of the thylakoid membrane by plastocyanin. This Chaetosphaeridium globosum (Charophycean green alga) protein is Photosystem I P700 chlorophyll a apoprotein A1.